The primary structure comprises 629 residues: DNA mismatch repair protein MutL (629 aa).

It belongs to the DNA mismatch repair MutL/HexB family.

Functionally, this protein is involved in the repair of mismatches in DNA. It is required for dam-dependent methyl-directed DNA mismatch repair. May act as a 'molecular matchmaker', a protein that promotes the formation of a stable complex between two or more DNA-binding proteins in an ATP-dependent manner without itself being part of a final effector complex. This is DNA mismatch repair protein MutL from Rhodospirillum rubrum (strain ATCC 11170 / ATH 1.1.1 / DSM 467 / LMG 4362 / NCIMB 8255 / S1).